The chain runs to 433 residues: MVSTSSFKTTKSEEIFTAAQKLMPGGVSSPVRAFKSVGGQPIVFDHVEGAYIWDVDNNQYIDYVGTWGPAICGHAHPDVISALHKALDKGTSFGAPCMQENILAEMVIDAVPSIEMVRFVNSGTEACMSVLRLMRAYTNREKIIKFEGCYHGHADMFLVKAGSGVATLGLPDSPGVPKTTTSNTLTAPYNDLEAVKALFENNKDEIAGLILEPVVGNAGFIPPDAGFLEGLRELTKEYGALLVFDEVMTGFRIAYGGAQEKFGVTPDLTTLGKVIGGGLPVGAYGGRKEIMSLVAPSGPMYQAGTLSGNPLAMTAGIKTLELLQKPGTYDYLDRITKKLINGLLTLAKEAGHEVYGGSISGMFGLFFTGEAVHNYEDAKKSDTAKFGRFHRGMLERGIYLAPSQFEAGFTSLAHSDEDVEKTLQAAKEVFATL.

Lys-273 carries the N6-(pyridoxal phosphate)lysine modification.

The protein belongs to the class-III pyridoxal-phosphate-dependent aminotransferase family. HemL subfamily. Homodimer. Pyridoxal 5'-phosphate serves as cofactor.

The protein localises to the cytoplasm. The enzyme catalyses (S)-4-amino-5-oxopentanoate = 5-aminolevulinate. Its pathway is porphyrin-containing compound metabolism; protoporphyrin-IX biosynthesis; 5-aminolevulinate from L-glutamyl-tRNA(Glu): step 2/2. It functions in the pathway porphyrin-containing compound metabolism; chlorophyll biosynthesis. This Gloeothece citriformis (strain PCC 7424) (Cyanothece sp. (strain PCC 7424)) protein is Glutamate-1-semialdehyde 2,1-aminomutase.